A 302-amino-acid polypeptide reads, in one-letter code: N-acetylmuramic acid 6-phosphate etherase (302 aa).

The SIS domain occupies 58–221 (IFERFKKGGR…TTTLMIKLGK (164 aa)). The active-site Proton donor is the Glu86. Glu117 is an active-site residue.

This sequence belongs to the GCKR-like family. MurNAc-6-P etherase subfamily. As to quaternary structure, homodimer.

The enzyme catalyses N-acetyl-D-muramate 6-phosphate + H2O = N-acetyl-D-glucosamine 6-phosphate + (R)-lactate. The protein operates within amino-sugar metabolism; N-acetylmuramate degradation. In terms of biological role, specifically catalyzes the cleavage of the D-lactyl ether substituent of MurNAc 6-phosphate, producing GlcNAc 6-phosphate and D-lactate. The polypeptide is N-acetylmuramic acid 6-phosphate etherase (Mycoplasma mycoides subsp. mycoides SC (strain CCUG 32753 / NCTC 10114 / PG1)).